We begin with the raw amino-acid sequence, 212 residues long: Pyridoxine/pyridoxamine 5'-phosphate oxidase (212 aa).

Residues 7 to 10 (RAKY) and Lys-65 contribute to the substrate site. FMN is bound by residues 60 to 65 (RTVLLK), 75 to 76 (FT), Lys-82, and Gln-104. The substrate site is built by Tyr-122, Arg-126, and Ser-130. FMN-binding positions include 139–140 (QS) and Trp-184. A substrate-binding site is contributed by 190-192 (RLH). FMN is bound at residue Arg-194.

The protein belongs to the pyridoxamine 5'-phosphate oxidase family. Homodimer. It depends on FMN as a cofactor.

The catalysed reaction is pyridoxamine 5'-phosphate + O2 + H2O = pyridoxal 5'-phosphate + H2O2 + NH4(+). It carries out the reaction pyridoxine 5'-phosphate + O2 = pyridoxal 5'-phosphate + H2O2. The protein operates within cofactor metabolism; pyridoxal 5'-phosphate salvage; pyridoxal 5'-phosphate from pyridoxamine 5'-phosphate: step 1/1. It participates in cofactor metabolism; pyridoxal 5'-phosphate salvage; pyridoxal 5'-phosphate from pyridoxine 5'-phosphate: step 1/1. Catalyzes the oxidation of either pyridoxine 5'-phosphate (PNP) or pyridoxamine 5'-phosphate (PMP) into pyridoxal 5'-phosphate (PLP). This chain is Pyridoxine/pyridoxamine 5'-phosphate oxidase, found in Aliarcobacter butzleri (strain RM4018) (Arcobacter butzleri).